We begin with the raw amino-acid sequence, 123 residues long: Ribosome-binding factor A (123 aa).

The protein belongs to the RbfA family. Monomer. Binds 30S ribosomal subunits, but not 50S ribosomal subunits or 70S ribosomes.

Its subcellular location is the cytoplasm. Functionally, one of several proteins that assist in the late maturation steps of the functional core of the 30S ribosomal subunit. Associates with free 30S ribosomal subunits (but not with 30S subunits that are part of 70S ribosomes or polysomes). Required for efficient processing of 16S rRNA. May interact with the 5'-terminal helix region of 16S rRNA. This Ralstonia nicotianae (strain ATCC BAA-1114 / GMI1000) (Ralstonia solanacearum) protein is Ribosome-binding factor A.